A 603-amino-acid polypeptide reads, in one-letter code: Elongation factor 4 (603 aa).

The tr-type G domain occupies 7–189; the sequence is SRIRNFSIIA…SIVHLVPPPQ (183 aa). GTP is bound by residues 19–24 and 136–139; these read DHGKST and NKID.

Belongs to the TRAFAC class translation factor GTPase superfamily. Classic translation factor GTPase family. LepA subfamily.

The protein resides in the cell inner membrane. The enzyme catalyses GTP + H2O = GDP + phosphate + H(+). Its function is as follows. Required for accurate and efficient protein synthesis under certain stress conditions. May act as a fidelity factor of the translation reaction, by catalyzing a one-codon backward translocation of tRNAs on improperly translocated ribosomes. Back-translocation proceeds from a post-translocation (POST) complex to a pre-translocation (PRE) complex, thus giving elongation factor G a second chance to translocate the tRNAs correctly. Binds to ribosomes in a GTP-dependent manner. The polypeptide is Elongation factor 4 (Cyanothece sp. (strain PCC 7425 / ATCC 29141)).